Here is a 370-residue protein sequence, read N- to C-terminus: DNA replication and repair protein RecF (370 aa).

30 to 37 is an ATP binding site; sequence GENAQGKT.

It belongs to the RecF family.

It localises to the cytoplasm. In terms of biological role, the RecF protein is involved in DNA metabolism; it is required for DNA replication and normal SOS inducibility. RecF binds preferentially to single-stranded, linear DNA. It also seems to bind ATP. This chain is DNA replication and repair protein RecF, found in Staphylococcus aureus (strain bovine RF122 / ET3-1).